The following is a 332-amino-acid chain: NADH-quinone oxidoreductase subunit H (332 aa).

9 helical membrane passes run 16-36 (VFFG…TYAI), 87-107 (YVLA…ALPF), 116-136 (IGVG…GVVT), 164-184 (LVMS…VDIV), 190-210 (VWFI…AVAE), 231-251 (VEYS…YLFA), 253-273 (AALI…LGWI), 277-297 (VWFA…RATF), and 312-332 (VLLP…SLFF).

This sequence belongs to the complex I subunit 1 family. NDH-1 is composed of 14 different subunits. Subunits NuoA, H, J, K, L, M, N constitute the membrane sector of the complex.

It localises to the cell membrane. It carries out the reaction a quinone + NADH + 5 H(+)(in) = a quinol + NAD(+) + 4 H(+)(out). Its function is as follows. NDH-1 shuttles electrons from NADH, via FMN and iron-sulfur (Fe-S) centers, to quinones in the respiratory chain. The immediate electron acceptor for the enzyme in this species is believed to be ubiquinone. Couples the redox reaction to proton translocation (for every two electrons transferred, four hydrogen ions are translocated across the cytoplasmic membrane), and thus conserves the redox energy in a proton gradient. This subunit may bind ubiquinone. The sequence is that of NADH-quinone oxidoreductase subunit H from Geobacillus thermodenitrificans (strain NG80-2).